The primary structure comprises 399 residues: Phosphoglycerate kinase (399 aa).

Substrate-binding positions include 24 to 26 (DLN), arginine 41, 64 to 67 (HLGR), arginine 123, and arginine 160. ATP-binding positions include lysine 210, glycine 298, glutamate 329, and 355 to 358 (GGDS).

This sequence belongs to the phosphoglycerate kinase family. Monomer.

The protein localises to the cytoplasm. It carries out the reaction (2R)-3-phosphoglycerate + ATP = (2R)-3-phospho-glyceroyl phosphate + ADP. It participates in carbohydrate degradation; glycolysis; pyruvate from D-glyceraldehyde 3-phosphate: step 2/5. In Salinispora tropica (strain ATCC BAA-916 / DSM 44818 / JCM 13857 / NBRC 105044 / CNB-440), this protein is Phosphoglycerate kinase.